A 209-amino-acid chain; its full sequence is LexA repressor (209 aa).

Positions 32–52 form a DNA-binding region, H-T-H motif; sequence VREIGKAVDLSSTSTVHGHLA. Catalysis depends on for autocatalytic cleavage activity residues Ser-131 and Lys-169.

It belongs to the peptidase S24 family. Homodimer.

It carries out the reaction Hydrolysis of Ala-|-Gly bond in repressor LexA.. Functionally, represses a number of genes involved in the response to DNA damage (SOS response), including recA and lexA. In the presence of single-stranded DNA, RecA interacts with LexA causing an autocatalytic cleavage which disrupts the DNA-binding part of LexA, leading to derepression of the SOS regulon and eventually DNA repair. This chain is LexA repressor, found in Enterococcus faecalis (strain ATCC 700802 / V583).